The chain runs to 536 residues: Arylsulfatase (536 aa).

Ca(2+)-binding residues include Asp-13, Asp-14, and Cys-51. The active-site Nucleophile is Cys-51. Cys-51 is modified (3-oxoalanine (Cys)). His-115 is a catalytic residue. Ca(2+)-binding residues include Asp-317 and Asn-318.

It belongs to the sulfatase family. In terms of assembly, monomer. Ca(2+) serves as cofactor. In terms of processing, the conversion to 3-oxoalanine (also known as C-formylglycine, FGly), of a serine or cysteine residue in prokaryotes and of a cysteine residue in eukaryotes, is critical for catalytic activity.

It is found in the cytoplasm. The catalysed reaction is an aryl sulfate + H2O = a phenol + sulfate + H(+). Its function is as follows. Hydrolyzes the bond between sulfate and the aromatic ring in a compound such as 4-nitrocatechol sulfate. This Pseudomonas aeruginosa (strain ATCC 15692 / DSM 22644 / CIP 104116 / JCM 14847 / LMG 12228 / 1C / PRS 101 / PAO1) protein is Arylsulfatase (atsA).